The chain runs to 302 residues: Acetylesterase (302 aa).

The first 21 residues, 1-21, serve as a signal peptide directing secretion; sequence MGRFLTTTALALLATGGAATA. N-linked (GlcNAc...) asparagine glycans are attached at residues asparagine 84 and asparagine 101.

The protein belongs to the carbohydrate esterase CE16 family.

Its subcellular location is the secreted. The enzyme catalyses an acetyl ester + H2O = an aliphatic alcohol + acetate + H(+). Functionally, acetyl esterase that acts as an exo-deacetylase. Liberates acetic acid from xylo-oligomers. The chain is Acetylesterase from Thermothelomyces thermophilus (Myceliophthora thermophila).